The primary structure comprises 267 residues: 7alpha-hydroxysteroid dehydrogenase (267 aa).

Residues 13–18, R38, 63–64, and N90 contribute to the NADP(+) site; these read SATRGI and DA. S145 and Y158 together coordinate cholate. NADP(+) is bound by residues Y158, K162, and 191–195; that span reads IATDA. The active-site Proton acceptor is the Y158.

Belongs to the short-chain dehydrogenases/reductases (SDR) family. In terms of assembly, homotetramer.

The enzyme catalyses cholate + NADP(+) = 3alpha,12alpha-dihydroxy-7-oxo-5beta-cholanate + NADPH + H(+). It carries out the reaction chenodeoxycholate + NADP(+) = 7-oxolithocholate + NADPH + H(+). Its function is as follows. 7alpha-hydroxysteroid dehydrogenase that catalyzes the NADP(+)-dependent oxidation of the 7alpha-hydroxy group of 7alpha-hydroxysteroids, such as the major human bile acids cholate and chenodeoxycholate, to the corresponding 7-oxosteroids. Is thus liley involved in the metabolism of primary bile acids. In Paraclostridium sordellii (Clostridium sordellii), this protein is 7alpha-hydroxysteroid dehydrogenase.